Consider the following 110-residue polypeptide: Large ribosomal subunit protein uL24 (110 aa).

Belongs to the universal ribosomal protein uL24 family. As to quaternary structure, part of the 50S ribosomal subunit.

One of two assembly initiator proteins, it binds directly to the 5'-end of the 23S rRNA, where it nucleates assembly of the 50S subunit. Functionally, one of the proteins that surrounds the polypeptide exit tunnel on the outside of the subunit. The sequence is that of Large ribosomal subunit protein uL24 from Chloroflexus aggregans (strain MD-66 / DSM 9485).